We begin with the raw amino-acid sequence, 932 residues long: Protocadherin gamma-A2 (932 aa).

The N-terminal stretch at 1–28 (MAALQKLPHCRKLFLLCFLLATLWEARA) is a signal peptide. 6 consecutive Cadherin domains span residues 29–133 (GQIR…APRF), 134–242 (GVEE…APVF), 243–347 (TQPE…APEF), 348–452 (YMTS…APAF), 453–562 (SRTS…PPEI), and 570–682 (DGST…EPSA). Residues 29–692 (GQIRYSVREE…KPNDSDLTLY (664 aa)) lie on the Extracellular side of the membrane. Residues N419 and N545 are each glycosylated (N-linked (GlcNAc...) asparagine). The N-linked (GlcNAc...) asparagine glycan is linked to N685. A helical transmembrane segment spans residues 693-713 (LVVAVAAVSCVFLAFVIVLLA). The Cytoplasmic portion of the chain corresponds to 714 to 932 (HRLRRWHKSR…KKKSGKKEKK (219 aa)). 2 disordered regions span residues 798–841 (LEEE…WPNN) and 902–932 (ATLT…KEKK). Residues 806–841 (FSQQAPPNTDWRFSQAQRPGTSGSQNGDDTGTWPNN) are compositionally biased toward polar residues. Positions 922–932 (NKKKSGKKEKK) are enriched in basic residues.

The protein resides in the cell membrane. In terms of biological role, potential calcium-dependent cell-adhesion protein. May be involved in the establishment and maintenance of specific neuronal connections in the brain. In Pan troglodytes (Chimpanzee), this protein is Protocadherin gamma-A2 (PCDHGA2).